Here is a 114-residue protein sequence, read N- to C-terminus: Fumarate reductase subunit D (114 aa).

A run of 3 helical transmembrane segments spans residues 24–44, 50–70, and 92–112; these read VSAI…PFGL, LITF…TIFP, and GGFI…FAVI.

This sequence belongs to the FrdD family. As to quaternary structure, part of an enzyme complex containing four subunits: a flavoprotein (FrdA), an iron-sulfur protein (FrdB), and two hydrophobic anchor proteins (FrdC and FrdD).

It localises to the cell inner membrane. Functionally, anchors the catalytic components of the fumarate reductase complex to the cell membrane, binds quinones. The protein is Fumarate reductase subunit D of Haemophilus influenzae (strain ATCC 51907 / DSM 11121 / KW20 / Rd).